The primary structure comprises 509 residues: Putative aldehyde dehydrogenase family 7 member A1 homolog (509 aa).

244–249 provides a ligand contact to NAD(+); that stretch reads GSTEVG. Glu266 (proton acceptor) is an active-site residue. Cys300 serves as the catalytic Nucleophile.

This sequence belongs to the aldehyde dehydrogenase family. As to quaternary structure, homotetramer.

It catalyses the reaction an aldehyde + NAD(+) + H2O = a carboxylate + NADH + 2 H(+). This chain is Putative aldehyde dehydrogenase family 7 member A1 homolog, found in Dictyostelium discoideum (Social amoeba).